The sequence spans 582 residues: MRKFLKVTLASALIGCGVIGTVSSLMVKEAKAVEIITHWVPHEVYGMPGEPDNSGKVFFSGLKAKYMGYPKDAQRSPYPGKYSKFWKTLPAYRYYIPDYMYNRDEVRPSNPIKGTFKLEQCVACHSVMTPGIVRDYNKSAHSKAEPAPTGCDTCHGNNHQKLTMPSSKACGTAECHETQYNEQGQGGIGSHASCSSFAQVECAWSIERPPGDTAGCTFCHTSPEERCSTCHQRHQFDPAVARRSEQCKTCHWGKDHRDWEAYDIGLHGTVYQVNKWDTEQFDFSKKLSDADYVGPTCQYCHMRGGHHNVQRASIVYTSMGMSMADRGAPLWKEKRDRWVSICDDCHSPRFARENLQAMDESVKDASLKYRETFKVAEDLLIDGVLDPMPKDLCPDWSGQHIWSLKIGAYHDGEAYGGTTGESGEFRMSNCTDVERLCFESVGYFQTYIYKGMAHGSWNDATYSDGSFGMDRWLVNVKQNASRARRLAALEKKVGISWQPEQFWKTGEWLDQLTGPYIVKNHPGKTIFDLCPDPGWLDTHHAPAEEVEYIERKLKELGITAGSHSAHHHESGHDPAARSMKEH.

The signal sequence occupies residues 1-32 (MRKFLKVTLASALIGCGVIGTVSSLMVKEAKA). Residues cysteine 121, cysteine 124, histidine 125, histidine 141, cysteine 151, cysteine 154, histidine 155, histidine 159, cysteine 170, cysteine 175, histidine 176, histidine 191, cysteine 216, cysteine 219, histidine 220, cysteine 227, cysteine 230, histidine 231, histidine 234, cysteine 247, cysteine 250, histidine 251, histidine 267, cysteine 297, cysteine 300, histidine 301, histidine 306, cysteine 342, cysteine 345, histidine 346, histidine 454, and tyrosine 462 each contribute to the heme c site. The segment at 561-582 (GSHSAHHHESGHDPAARSMKEH) is disordered. Positions 567-582 (HHESGHDPAARSMKEH) are enriched in basic and acidic residues.

As to quaternary structure, homotrimer; subunits are linked by two covalent bonds between Tyr-462 of one subunit and heme P460 of an adjacent subunit. May form 24-mer of an octamer of trimers. It depends on heme c as a cofactor.

It is found in the anammoxosome. It carries out the reaction hydrazine + 4 Fe(III)-[cytochrome c] = N2 + 4 Fe(II)-[cytochrome c] + 4 H(+). The protein operates within nitrogen metabolism. With respect to regulation, is strongly and competitively inhibited by NO and hydroxylamine. Catalyzes the four-electron oxidation of hydrazine to N2. The electrons derived from hydrazine oxidation may be transferred to the quinone pool and exploited to promote the generation of proton-motive force (pmf) across the anammoxosome membrane. Is involved in anaerobic ammonium oxidation (anammox), a biological process in which nitrite is used as the electron acceptor in the conversion of ammonium to dinitrogen gas (N2) and water; this bacterial process has a major role in the Earth's nitrogen cycle and has been estimated to synthesize up to 50% of the dinitrogen gas emitted into our atmosphere from the oceans. Cannot oxidize hydroxylamine to NO. The sequence is that of Hydrazine dehydrogenase from Kuenenia stuttgartiensis.